Consider the following 360-residue polypeptide: DNA replication and repair protein RecF (360 aa).

Residue 30–37 (GQNGSGKT) participates in ATP binding.

The protein belongs to the RecF family.

The protein resides in the cytoplasm. Its function is as follows. The RecF protein is involved in DNA metabolism; it is required for DNA replication and normal SOS inducibility. RecF binds preferentially to single-stranded, linear DNA. It also seems to bind ATP. The protein is DNA replication and repair protein RecF of Shewanella baltica (strain OS185).